Reading from the N-terminus, the 620-residue chain is Apoptosis regulator MC163R (620 aa).

The chain crosses the membrane as a helical span at residues Ala-113–Leu-133.

The protein localises to the host mitochondrion. It is found in the host membrane. Its function is as follows. Plays a role in the inhibition of host apoptosis. Prevents host TNF-alpha-induced mitochondrial membrane permeabilization and reduces caspase-3/CASP3 and PARP1 cleavage induced by the intrinsic apoptotic pathway. The polypeptide is Apoptosis regulator MC163R (MC163R) (Homo sapiens (Human)).